Reading from the N-terminus, the 102-residue chain is MGKQKIRIRLKAFDHRILDQSSEKIVETAKRTGAAVSGPIPLPTEKSIYTILRSPHVNKDSREQFEMRTHKRLIDILEPNPKTVDALMRLDLPAGVDIEIKL.

It belongs to the universal ribosomal protein uS10 family. As to quaternary structure, part of the 30S ribosomal subunit.

Its function is as follows. Involved in the binding of tRNA to the ribosomes. This chain is Small ribosomal subunit protein uS10, found in Heliobacterium modesticaldum (strain ATCC 51547 / Ice1).